The following is a 307-amino-acid chain: Nitric oxide synthase-interacting protein homolog (307 aa).

The tract at residues 120–159 (PAMTPAHSSAAASEKPSTSSAAAAASSESSSASSISNMTN) is disordered. The segment covering 127–155 (SSAAASEKPSTSSAAAAASSESSSASSIS) has biased composition (low complexity).

This sequence belongs to the NOSIP family.

The protein resides in the cytoplasm. The protein localises to the nucleus. In terms of biological role, negatively regulates nitric oxide production by inducing nitric oxide synthase translocation to actin cytoskeleton and inhibiting its enzymatic activity. The sequence is that of Nitric oxide synthase-interacting protein homolog from Drosophila melanogaster (Fruit fly).